Consider the following 361-residue polypeptide: Replication factor C subunit 3 (361 aa).

Low complexity predominate over residues 1–28; that stretch reads MAGATAATPMDIDAAAPPPGAAAKGKAP. The segment at 1-39 is disordered; sequence MAGATAATPMDIDAAAPPPGAAAKGKAPLSSTPGGRAAP. 77 to 84 contacts ATP; the sequence is YGPPGTGK.

It belongs to the activator 1 small subunits family. Heterotetramer of subunits RFC2, RFC3, RFC4 and RFC5 that can form a complex with RFC1. Expressed in roots, leaves, shoot apical meristem (SAM), flag leaves and panicles.

The protein localises to the nucleus. May be involved in DNA replication and thus regulate cell proliferation. The polypeptide is Replication factor C subunit 3 (RFC3) (Oryza sativa subsp. japonica (Rice)).